A 685-amino-acid chain; its full sequence is MAATAAAAAAAPPADPPDSSPAASSPPRPSPEELVARAVAPVKPAFLRPPLSATPPKDEGKANGGGAVVAEKKSKRQLKRERKQEQKSSSHLCIEVGKSGNVSSCKYGDSCRFSHDIDAYLAQKPADLEGTCPFTNLDQLCPYGLTCRFLGTHKDIHAASGNLSEKHEINALNKDIQKLLWKNKYKFPKASAQIKLLGLKEVIKSKPDAANDDKKVNHDNLDGNDDENKEPLCNPPVNAECDSTLCEELDRSEGEPLIDNSIPCVEPRPTKKSKVESDEIDKHGAGTLNTNTESEDPNLSNGLEPSNNSSSCRTDLITTPHLREKKIIDFREKLYLAPLTTVGNLPFRRLCKTLGADITCGEMAMCTNLLQGQASEWALLRRHSSEDLFGVQICGAYPDTVARTVELVDNECSVDFIDINMGCPIDIVVNKGAGSSLLTKPMRIKSIVQAASTVTEKPLTVKVRTAFFEGRNRADSIVSDIYDWGASAITVHGRSRQQRYSKLADWDYIYQCAQKAPDQLHVVGNGDVFSFTDWNKHVSGCSKISTSMIARGALIKPWIFTEVKEQRHWDITSGERFNILKDFVSFGLEHWGSDSKGVETTRYFLLEWLSYTCRYIPVGLLDVIPQRLNWRPPSYCGRDDLETLMISDSAADWIRISEMLLGKVPEGFTFTPKHKSNAYDRAENG.

A compositionally biased stretch (low complexity) spans 1–12; sequence MAATAAAAAAAP. 3 disordered regions span residues 1–91, 209–234, and 257–314; these read MAAT…SSSH, AAND…PLCN, and LIDN…SCRT. Positions 13 to 29 are enriched in pro residues; that stretch reads PADPPDSSPAASSPPRP. A C3H1-type zinc finger spans residues 87 to 118; it reads KSSSHLCIEVGKSGNVSSCKYGDSCRFSHDID. 2 stretches are compositionally biased toward basic and acidic residues: residues 209 to 221 and 273 to 284; these read AAND…HDNL and SKVESDEIDKHG. The span at 287-314 shows a compositional bias: polar residues; sequence TLNTNTESEDPNLSNGLEPSNNSSSCRT. FMN contacts are provided by residues 338–340 and Q392; that span reads PLT. C423 (proton donor) is an active-site residue. Residues K462, H492, 525-527, and 550-551 each bind FMN; these read NGD and AR.

This sequence belongs to the Dus family. Dus3 subfamily. It depends on FMN as a cofactor.

It carries out the reaction 5,6-dihydrouridine(47) in tRNA + NAD(+) = uridine(47) in tRNA + NADH + H(+). The catalysed reaction is 5,6-dihydrouridine(47) in tRNA + NADP(+) = uridine(47) in tRNA + NADPH + H(+). The enzyme catalyses a 5,6-dihydrouridine in mRNA + NAD(+) = a uridine in mRNA + NADH + H(+). It catalyses the reaction a 5,6-dihydrouridine in mRNA + NADP(+) = a uridine in mRNA + NADPH + H(+). Its function is as follows. Catalyzes the synthesis of dihydrouridine, a modified base found in the D-loop of most tRNAs. Specifically modifies U47 in cytoplasmic tRNAs. Catalyzes the synthesis of dihydrouridine in some mRNAs, thereby affecting their translation. The polypeptide is tRNA-dihydrouridine(47) synthase [NAD(P)(+)]-like (Oryza sativa subsp. japonica (Rice)).